Consider the following 131-residue polypeptide: Norrin (131 aa).

The signal sequence occupies residues 1–24; it reads MRNHVLAASISMLSLLAIMGDTDS. Intrachain disulfides connect Cys37–Cys94, Cys53–Cys108, Cys63–Cys124, and Cys67–Cys126. A CTCK domain is found at 37 to 130; the sequence is CMRHHYVDSI…ILSCHCEECS (94 aa).

In terms of assembly, homodimer; disulfide-linked. Component of a complex, at least composed of TSPAN12, FZD4, LRP5/6 and norrin (NDP). Binds FZD4 with high affinity. Interacts with LRP6 (via Beta-propellers 1 and 2). As to expression, expressed in the outer nuclear, inner nuclear and ganglion cell layers of the retina.

It is found in the secreted. Its function is as follows. Activates the canonical Wnt signaling pathway through FZD4 and LRP5 coreceptor. Plays a central role in retinal vascularization by acting as a ligand for FZD4 that signals via stabilizing beta-catenin (CTNNB1) and activating LEF/TCF-mediated transcriptional programs. Acts in concert with TSPAN12 to activate FZD4 independently of the Wnt-dependent activation of FZD4, suggesting the existence of a Wnt-independent signaling that also promote accumulation the beta-catenin (CTNNB1). May be involved in a pathway that regulates neural cell differentiation and proliferation. Possible role in neuroectodermal cell-cell interaction. In Mus musculus (Mouse), this protein is Norrin (Ndp).